Reading from the N-terminus, the 138-residue chain is Secreted RxLR effector protein 51 (138 aa).

Residues 1–19 form the signal peptide; it reads MRSSTILFVLGVAMVAVNG. The RxLR-dEER signature appears at 38 to 53; sequence RLLRSNSGKHKTDEER. N-linked (GlcNAc...) asparagine glycosylation occurs at Asn-101.

This sequence belongs to the RxLR effector family.

The protein resides in the secreted. Its subcellular location is the host nucleus. Its function is as follows. Secreted effector that completely suppresses the host cell death induced by cell death-inducing proteins. This Plasmopara viticola (Downy mildew of grapevine) protein is Secreted RxLR effector protein 51.